The following is a 105-amino-acid chain: U7-hexatoxin-Hi1a (105 aa).

Positions 1–23 (MKTILLFLGVCAVGASMMTGGWT) are cleaved as a signal peptide.

Belongs to the cystatin family. Contains 2 disulfide bonds. In terms of tissue distribution, expressed by the venom gland.

It localises to the secreted. Its function is as follows. Inhibits various C1 cysteine proteases. This protein has no toxic activity and its function in the venom is unknown. It may play a role as a housekeeping or regulatory protein. The sequence is that of U7-hexatoxin-Hi1a from Hadronyche infensa (Fraser island funnel-web spider).